A 327-amino-acid polypeptide reads, in one-letter code: Flotillin-like protein FloA (327 aa).

2 helical membrane-spanning segments follow: residues 8–28 and 29–49; these read VLLITGGILIFLAIFFTLVPI and PLWISSLAAGVRVSIFTLVGM.

This sequence belongs to the flotillin-like FloA family. In terms of assembly, homooligomerizes.

The protein localises to the cell membrane. The protein resides in the membrane raft. Its function is as follows. Found in functional membrane microdomains (FMM) that may be equivalent to eukaryotic membrane rafts. FMMs are highly dynamic and increase in number as cells age. Flotillins are thought to be important factors in membrane fluidity. The chain is Flotillin-like protein FloA from Exiguobacterium sibiricum (strain DSM 17290 / CCUG 55495 / CIP 109462 / JCM 13490 / 255-15).